Reading from the N-terminus, the 228-residue chain is Uridylate kinase (228 aa).

Residue glycine 9–serine 10 coordinates ATP. Glycine 44 contacts UMP. Residues glycine 45 and arginine 49 each coordinate ATP. Residues aspartate 66 and isoleucine 114–threonine 120 each bind UMP. The ATP site is built by threonine 140, tyrosine 146, and aspartate 149.

This sequence belongs to the UMP kinase family. As to quaternary structure, homohexamer.

Its subcellular location is the cytoplasm. It carries out the reaction UMP + ATP = UDP + ADP. The protein operates within pyrimidine metabolism; CTP biosynthesis via de novo pathway; UDP from UMP (UMPK route): step 1/1. Inhibited by UTP. Catalyzes the reversible phosphorylation of UMP to UDP. The sequence is that of Uridylate kinase from Haloarcula marismortui (strain ATCC 43049 / DSM 3752 / JCM 8966 / VKM B-1809) (Halobacterium marismortui).